A 262-amino-acid chain; its full sequence is Phosphate import ATP-binding protein PstB 2 (262 aa).

Positions Phe18–Ile257 constitute an ABC transporter domain. Residue Gly50 to Ser57 participates in ATP binding.

The protein belongs to the ABC transporter superfamily. Phosphate importer (TC 3.A.1.7) family. As to quaternary structure, the complex is composed of two ATP-binding proteins (PstB), two transmembrane proteins (PstC and PstA) and a solute-binding protein (PstS).

The protein localises to the cell membrane. It carries out the reaction phosphate(out) + ATP + H2O = ADP + 2 phosphate(in) + H(+). Its function is as follows. Part of the ABC transporter complex PstSACB involved in phosphate import. Responsible for energy coupling to the transport system. This Symbiobacterium thermophilum (strain DSM 24528 / JCM 14929 / IAM 14863 / T) protein is Phosphate import ATP-binding protein PstB 2.